Reading from the N-terminus, the 81-residue chain is Protein L83L (81 aa).

The interval 1–28 (MDTSLKNNDGALEADNKNYQDYKDEPDK) is disordered. A compositionally biased stretch (basic and acidic residues) spans 14-28 (ADNKNYQDYKDEPDK).

It belongs to the asfivirus L83L family. Interacts with host IL1B.

It localises to the host cytoplasm. Functionally, may subvert the host innate immune response by interacting with host IL1B and interfering with its function. The protein is Protein L83L of Ornithodoros (relapsing fever ticks).